A 955-amino-acid chain; its full sequence is MTRKNTTTNPWAKFHGPNLGYVIEQYDLYVTGAGSVDPELQELFEIFGAPSFQDDVVTGDNTATHFSPQNTGNIEKILKVVQLVEQIRSFGHTLAHINPMEDAANGQSLIEKTMNELSDADLKAIPAKTVWQDAPEGIHTALDVIHRLKDVYTKSLAYEFSHIQDSEERAWLHQMVESNSLRQPLSNKKRTALLKRLTAVEGFEQFLHKTFVGQKRFSIEGVDMLVPVLDEIVSEGAKGGVEDVMIGMAHRGRLSVLAHVLEKPYSHMFAEFKHAKIEGAVANAGWTGDVKYHLGREQVVGNEEVSTRVTLANNPSHLEFVNPVVEGFARAAQENRKKSGLPEQDTTKSFVILVHGDAAFPGQGVVSETLNLSRLNAYQTGGTIHVIANNAVGFTTDSYDSRSTKYSSDLAKGFDIPIVHVNADDPEACLAAANLAIQYRTLFKKDFLIDLIGYRRYGHNEMDDPAVTQPQVYKKIKNHPTVRAIYADQLQSAGVLNADEVETITQFMQEELKAEYAQVPPADTSAATIHVKVPEVVAKGIQPIDTGVSIESLRAINEGLLSWPEGFNVYPKVKKILERRKDALEENGKIEWALAESLAFASILQEGTPIRLTGQDSQRGTFAHRHIVLHDTDTNETYSPLHRLPNINASFSVHNSPLSEAAVVGYEYGYNVFAPETLVMWEAQYGDFSNTAQALFDQYVSAGRAKWGQKSGLVLLLPHGYEGQGPEHSSARPERFLQLAAENNWTVANLTSAAQYFHILRRQASILGTEAVRPLVLMTPKSLLRHPLTLSTASQLSEGRFQPALEQENLGAKPNKVKRLVLSTGKMAIDLAAEIESGKHEYSLDEVHMVRVEQLYPFPAEKVQSIIKRFKNLEEIIWVQEEPRNMGAWHYMAPILFELAGDKVKTGYIGRPDRSSPSGGDPFAHKAEQELIVAHALDVKYNFRQDKQEIEVFSN.

It belongs to the alpha-ketoglutarate dehydrogenase family. In terms of assembly, homodimer. Part of the 2-oxoglutarate dehydrogenase (OGDH) complex composed of E1 (2-oxoglutarate dehydrogenase), E2 (dihydrolipoamide succinyltransferase) and E3 (dihydrolipoamide dehydrogenase); the complex contains multiple copies of the three enzymatic components (E1, E2 and E3). Requires thiamine diphosphate as cofactor.

The enzyme catalyses N(6)-[(R)-lipoyl]-L-lysyl-[protein] + 2-oxoglutarate + H(+) = N(6)-[(R)-S(8)-succinyldihydrolipoyl]-L-lysyl-[protein] + CO2. Functionally, E1 component of the 2-oxoglutarate dehydrogenase (OGDH) complex which catalyzes the decarboxylation of 2-oxoglutarate, the first step in the conversion of 2-oxoglutarate to succinyl-CoA and CO(2). In Bacillus mycoides (strain KBAB4) (Bacillus weihenstephanensis), this protein is 2-oxoglutarate dehydrogenase E1 component.